The chain runs to 358 residues: Prostaglandin E2 receptor EP2 subtype (358 aa).

Topologically, residues 1–23 are extracellular; the sequence is MGNASNDSQSEDCETRQWLPPGE. N-linked (GlcNAc...) asparagine glycans are attached at residues asparagine 3 and asparagine 6. Residues 24-47 form a helical membrane-spanning segment; sequence SPAISSVMFSAGVLGNLIALALLA. Over 48 to 65 the chain is Cytoplasmic; sequence RRWRGDVGCSAGRRSSLS. A helical membrane pass occupies residues 66-91; sequence LFHVLVTELVFTDLLGTCLISPVVLA. Residues 92–111 are Extracellular-facing; sequence SYARNQTLVALAPESRACTY. N-linked (GlcNAc...) asparagine glycosylation occurs at asparagine 96. Cysteine 109 and cysteine 187 are joined by a disulfide. The helical transmembrane segment at 112–132 threads the bilayer; that stretch reads FAFAMTFFSLATMLMLFAMAL. Residues 133 to 151 are Cytoplasmic-facing; sequence ERYLSIGHPYFYQRRVSRS. A helical membrane pass occupies residues 152 to 176; the sequence is GGLAVLPVIYAVSLLFCSLPLLDYG. Residues 177–198 lie on the Extracellular side of the membrane; sequence QYVQYCPGTWCFIRHGRTAYLQ. The chain crosses the membrane as a helical span at residues 199 to 223; it reads LYATLLLLLIVSVLACNFSVILNLI. Topologically, residues 224 to 262 are cytoplasmic; it reads RMHRRSRRSRCGPSLGSGRGGPGARRRGERVSMAEETDH. Residues 231-253 form a disordered region; that stretch reads RSRCGPSLGSGRGGPGARRRGER. Residues 263 to 286 form a helical membrane-spanning segment; the sequence is LILLAIMTITFAVCSLPFTIFAYM. N-linked (GlcNAc...) asparagine glycosylation occurs at asparagine 287. Topologically, residues 287–299 are extracellular; that stretch reads NETSSRKEKWDLQ. Residues 300–323 traverse the membrane as a helical segment; that stretch reads ALRFLSINSIIDPWVFAILRPPVL. Residues 324-358 are Cytoplasmic-facing; that stretch reads RLMRSVLCCRISLRTQDATQTSCSTQSDASKQADL.

This sequence belongs to the G-protein coupled receptor 1 family. As to expression, placenta and lung.

It is found in the cell membrane. Its function is as follows. Receptor for prostaglandin E2 (PGE2). The activity of this receptor is mediated by G(s) proteins that stimulate adenylate cyclase. The subsequent raise in intracellular cAMP is responsible for the relaxing effect of this receptor on smooth muscle. The chain is Prostaglandin E2 receptor EP2 subtype (PTGER2) from Homo sapiens (Human).